The primary structure comprises 284 residues: Circadian clock oscillator protein KaiA (284 aa).

The segment at 1–135 (MLSQIAICIW…LRLAPVETMA (135 aa)) is psR domain, binds oxidized quinones. The 164-residue stretch at 1–164 (MLSQIAICIW…DLAQRLQERL (164 aa)) folds into the KaiA N-terminal domain. The interval 165 to 173 (GYLGVYYKR) is flexible linker. The KaiA C-terminal domain occupies 174–282 (DPDRFLRNLP…CEMYRRSIPR (109 aa)).

The protein belongs to the KaiA family. As to quaternary structure, homodimer. The KaiABC complex composition changes during the circadian cycle to control KaiC phosphorylation. Complexes KaiC(6), KaiA(2-4):KaiC(6), KaiB(6):KaiC(6) and KaiC(6):KaiB(6):KaiA(12) are among the most important forms, many form cooperatively. The KaiA:KaiB complex is only found at 20-24 hours in the circadian cycle (subjective night). Binds to the C-terminal A-loop of KaiC via a coiled-coil structure. KaiA and CikA compete for binding to KaiB(fs). CikA copurifies with this protein in the clock complex. Interacts with LdpA.

Binding of oxidized quinones (produced as darkness falls) prevents KaiA from stimulating KaiC autophosphorylation. Key component of the KaiABC oscillator complex, which constitutes the main circadian regulator in cyanobacteria. Complex composition changes during the circadian cycle to control KaiC phosphorylation. KaiA stimulates KaiC autophosphorylation, while KaiB sequesters KaiA, leading to KaiC autodephosphorylation. KaiA binding to the KaiC CII domain during the subjective day yields KaiA(2-4):KaiC(6) complexes which stimulate KaiC autophosphorylation. A KaiA dimer is sufficient to enhance KaiC hexamer phosphorylation. Phospho-Ser-431 KaiC accumulation triggers binding of KaiB during the subjective night to form the KaiB(6):KaiC(6) complex, leading to changes in the output regulators CikA and SasA. KaiB(6):KaiC(6) formation exposes a site for KaiA binding on KaiB that sequesters KaiA from KaiC's CII domain, making the KaiC(6):KaiB(6):KaiA(12) complex resulting in KaiC autodephosphorylation. Complete dephosphorylation of KaiC leads to dissociation of KaiA(2):KaiB(1), completing 1 cycle of the Kai oscillator. Its function is as follows. Circadian oscillations can be generated in vitro by incubating KaiA, KaiB and KaiC with 1 mM ATP. The cycle is self-sustainable for at least 3 cycles and resistant to temperature changes. A very robust clock is reconstituted with KaiA, KaiB, KaiC, SasA, CikA and RpaA; output is measured by transcription from an appropriate reporter. In terms of biological role, kaiA binds oxidized quinones via its N-terminal PsR domain and is able to sense redox signals directly; quinone analog DBMIB (2,5-dibromo-3-methyl-6-isopropyl-p-benzoquinone) blocks KaiA stimulation of KaiC phosphorylation. The homodimer binds up to 8 quinones in the crystal structure, 3 in the PsR domain and 1 via the C-terminal helical bundle. Binding of oxidized quinone to the KaiA C-terminal domain reduces the phosphorylation of KaiC slightly; quinones may interact in a complex manner with KaiA to mediate clock input. This Synechococcus elongatus (strain ATCC 33912 / PCC 7942 / FACHB-805) (Anacystis nidulans R2) protein is Circadian clock oscillator protein KaiA.